Here is a 311-residue protein sequence, read N- to C-terminus: Triacylglycerol lipase (311 aa).

Positions 1–26 (MKKKSLLPLGLAIGLASLAASPLIQA) are cleaved as a signal peptide. The AB hydrolase-1 domain occupies 35–280 (PIVLAHGMLG…DNYRMNHLDE (246 aa)). Residue Met42 participates in substrate binding. Ser108 functions as the Nucleophile in the catalytic mechanism. Position 109 (His109) interacts with substrate. A disulfide bridge connects residues Cys209 and Cys261. Ca(2+) is bound at residue Asp235. Catalysis depends on charge relay system residues Asp255 and His277. Positions 279, 283, and 287 each coordinate Ca(2+).

The protein belongs to the AB hydrolase superfamily. Pseudomonas lipase family. Monomer. It depends on Ca(2+) as a cofactor.

The protein resides in the secreted. It catalyses the reaction a triacylglycerol + H2O = a diacylglycerol + a fatty acid + H(+). Its activity is regulated as follows. Na(+) increases lipase activity. Inhibited by diethyl p-nitrophenyl phosphate and 3,4-dichloroisocoumarin (DCI). Functionally, catalyzes the hydrolysis of triacylglycerol. It also exhibits some esterase activity with p-nitrophenyl acetate and Tween 80 as substrates, however the lipase activity is approximately eight times the esterase activity. It shows a marked specificity for the 1,3-oleyl residues of triolein. The sequence is that of Triacylglycerol lipase from Pseudomonas aeruginosa (strain ATCC 15692 / DSM 22644 / CIP 104116 / JCM 14847 / LMG 12228 / 1C / PRS 101 / PAO1).